Reading from the N-terminus, the 937-residue chain is Protein Niban 1 (937 aa).

G2 carries the N-myristoyl glycine lipid modification. Residues S578, S581, S595, S601, and S646 each carry the phosphoserine modification. The segment covering 584–595 has biased composition (polar residues); the sequence is DLKTSMGSNQAS. 2 disordered regions span residues 584–710 and 724–891; these read DLKT…GSLR and SAPE…LGGN. The span at 640 to 651 shows a compositional bias: low complexity; the sequence is ASISGSSPPSGE. Positions 655–681 are enriched in polar residues; it reads VSVSGVDNSAGNPLSADNSAGPLSSHL. The segment covering 688 to 701 has biased composition (basic and acidic residues); the sequence is EPPKDEETAHKRPE. A phosphoserine mark is found at S708 and S768. 2 stretches are compositionally biased toward polar residues: residues 802–817 and 855–869; these read PTSQ…NTSC and VTVT…SSNP.

Belongs to the Niban family. As to expression, detected in brain, lung, spleen and skeletal muscle. Expressed in small renal tumors but not in normal kidney.

The protein resides in the cytoplasm. It localises to the membrane. In terms of biological role, regulates phosphorylation of a number of proteins involved in translation regulation including EIF2A, EIF4EBP1 and RPS6KB1. May be involved in the endoplasmic reticulum stress response. The protein is Protein Niban 1 of Rattus norvegicus (Rat).